A 183-amino-acid chain; its full sequence is Proton-transporting V-type ATPase complex assembly regulator TMEM9 (183 aa).

Positions 1–20 (MKLLCLVAVVGCLLVPPAQA) are cleaved as a signal peptide. N-linked (GlcNAc...) asparagine glycosylation is found at Asn21, Asn38, and Asn47. The Extracellular portion of the chain corresponds to 21–89 (NKSSEDIRCK…YEERSTTTIK (69 aa)). The helical transmembrane segment at 90–110 (VIIVIYLSVVGALLLYMAFLM) threads the bilayer. The Cytoplasmic portion of the chain corresponds to 111 to 183 (LVDPLIRKPD…TVFDRHKMLS (73 aa)). At Ser144 the chain carries Phosphoserine.

This sequence belongs to the TMEM9 family. In terms of assembly, interacts with the v-ATPase accessory protein ATP6AP2 and with the v-ATPase complex subunit ATP6V0D1; these interactions lead to the assembly of the v-ATPase complex. In terms of processing, N-glycosylated. As to expression, expressed in heart, lung, kidney, liver and intestines. Enriched in the hepatocytes around the central vein.

It localises to the lysosome membrane. The protein resides in the late endosome membrane. It is found in the endosome. Its subcellular location is the multivesicular body membrane. Functionally, transmembrane protein that binds to and facilitates the assembly of lysosomal proton-transporting V-type ATPase (v-ATPase), resulting in enhanced lysosomal acidification and trafficking. By bringing the v-ATPase accessory protein ATP6AP2 and the v-ATPase subunit ATP6V0D1 together, allows v-ATPase complex formation and activation. TMEM9-controlled vesicular acidification induces hyperactivation of Wnt/beta-catenin signaling, involved in development, tissue homeostasis and tissue regeneration, through lysosomal degradation of adenomatous polyposis coli/APC. In the liver, involved in hepatic regeneration. In Mus musculus (Mouse), this protein is Proton-transporting V-type ATPase complex assembly regulator TMEM9.